The following is a 106-amino-acid chain: MAVPSCQTDGVRALKFVDHVGGEELGDNVRGVVLIACTTISMSPWPVTGMAGLVGSRTVSTSGVRICGLTATGTVIAHQLHMTVAAVGFRRIGLAGDRARPIWRIS.

This is an uncharacterized protein from Sinorhizobium fredii (strain NBRC 101917 / NGR234).